A 497-amino-acid polypeptide reads, in one-letter code: Putative diacyglycerol O-acyltransferase MT3584 (497 aa).

The active-site Proton acceptor is the H143.

Belongs to the long-chain O-acyltransferase family.

The enzyme catalyses an acyl-CoA + a 1,2-diacyl-sn-glycerol = a triacyl-sn-glycerol + CoA. It participates in glycerolipid metabolism; triacylglycerol biosynthesis. This Mycobacterium tuberculosis (strain CDC 1551 / Oshkosh) protein is Putative diacyglycerol O-acyltransferase MT3584.